Here is a 623-residue protein sequence, read N- to C-terminus: Lamin-B2.L (623 aa).

The span at 1–18 (MATTTPSRSTRSSMQSPA) shows a compositional bias: low complexity. The tract at residues 1–30 (MATTTPSRSTRSSMQSPARGTSTPLSPTRI) is disordered. The tract at residues 2–27 (ATTTPSRSTRSSMQSPARGTSTPLSP) is head. Polar residues predominate over residues 19 to 30 (RGTSTPLSPTRI). Residue Ser-26 is modified to Phosphoserine. A coil 1A region spans residues 28 to 64 (TRISRLQEKEELRHLNDRLAVYIDRVRALELENDRLM). In terms of domain architecture, IF rod spans 35 to 391 (EKEELRHLND…KLLEGEEERL (357 aa)). A linker 1 region spans residues 64 to 74 (MVKISEKEEVT). The segment at 75–211 (TREVSGIKNL…QSLQEEMDFR (137 aa)) is coil 1B. The linker 2 stretch occupies residues 212-235 (KNIYEEESRETRKRHERRIVEVDR). A coil 2 region spans residues 236-378 (GHHYDYESKL…VKLALDLEIN (143 aa)). The tail stretch occupies residues 380–592 (YRKLLEGEEE…VTKSVLRNVE (213 aa)). Disordered regions lie at residues 388–473 (EERL…LSQQ) and 591–623 (VEEE…CSVM). Residue Ser-396 is modified to Phosphoserine. Residues 398-416 (ESRVTVSRATSSSSSATRT) are compositionally biased toward low complexity. Positions 420–425 (KRRRVE) match the Nuclear localization signal motif. Residues 443–473 (LGSSRITASEGSSRTITSGQSSTTRFHLSQQ) show a composition bias toward polar residues. In terms of domain architecture, LTD spans 468–585 (FHLSQQASAT…EEVAVRTVTK (118 aa)). The segment covering 592 to 604 (EEEEDEDADFGEE) has biased composition (acidic residues). The segment covering 612-623 (DPRTTSRGCSVM) has biased composition (polar residues). At Cys-620 the chain carries Cysteine methyl ester. The S-farnesyl cysteine moiety is linked to residue Cys-620. Positions 621 to 623 (SVM) are cleaved as a propeptide — removed in mature form.

This sequence belongs to the intermediate filament family. Post-translationally, phosphorylation plays a key role in lamin organization, subcellular localization and nuclear envelope disintegration. Phosphorylation by CDK1 at Ser-26 at the onset of mitosis drives lamin disassembly and nuclear envelope breakdown.

The protein localises to the nucleus lamina. Its subcellular location is the nucleus envelope. It is found in the nucleus. The protein resides in the nucleoplasm. It localises to the nucleus matrix. Functionally, lamins are intermediate filament proteins that assemble into a filamentous meshwork, and which constitute the major components of the nuclear lamina, a fibrous layer on the nucleoplasmic side of the inner nuclear membrane. Lamins provide a framework for the nuclear envelope, bridging the nuclear envelope and chromatin, thereby playing an important role in nuclear assembly, chromatin organization, nuclear membrane and telomere dynamics. The structural integrity of the lamina is strictly controlled by the cell cycle, as seen by the disintegration and formation of the nuclear envelope in prophase and telophase, respectively. This chain is Lamin-B2.L (lmnb2.L), found in Xenopus laevis (African clawed frog).